The chain runs to 406 residues: Tryptophan synthase beta chain (406 aa).

N6-(pyridoxal phosphate)lysine is present on K99.

The protein belongs to the TrpB family. In terms of assembly, tetramer of two alpha and two beta chains. Requires pyridoxal 5'-phosphate as cofactor.

It carries out the reaction (1S,2R)-1-C-(indol-3-yl)glycerol 3-phosphate + L-serine = D-glyceraldehyde 3-phosphate + L-tryptophan + H2O. The protein operates within amino-acid biosynthesis; L-tryptophan biosynthesis; L-tryptophan from chorismate: step 5/5. Its function is as follows. The beta subunit is responsible for the synthesis of L-tryptophan from indole and L-serine. The sequence is that of Tryptophan synthase beta chain (trpB) from Agrobacterium fabrum (strain C58 / ATCC 33970) (Agrobacterium tumefaciens (strain C58)).